The sequence spans 1384 residues: ABC transporter C family member 2 (1384 aa).

Residues 104–388 enclose the ABC transmembrane type-1 1 domain; it reads NKISVATKIF…LPEAIHRALS (285 aa). Transmembrane regions (helical) follow at residues 112–132, 140–160, 226–246, 247–267, and 333–353; these read IFVA…IYYI, TFKF…SLTL, IFVF…IVGL, SGLV…FLST, and MITQ…YALT. An ABC transporter 1 domain is found at 505 to 724; sequence IEYDGAVQPS…GIDFESIMKT (220 aa). An ATP-binding site is contributed by 537–544; it reads GIVGSGKT. Residues 729–756 form a disordered region; that stretch reads IDENDQSSTSTTDKKSSTSSSSSELKKS. Low complexity predominate over residues 735–756; the sequence is SSTSTTDKKSSTSSSSSELKKS. Transmembrane regions (helical) follow at residues 813 to 833, 852 to 872, 941 to 961, 1036 to 1056, and 1061 to 1081; these read LFFL…LSDF, ILYY…RYFM, LFMM…LVVV, GIRL…SSLF, and GFSV…NWTI. The ABC transmembrane type-1 2 domain occupies 814–1093; it reads FFLTCALYFI…MTELEVKMNS (280 aa). Positions 1137–1371 constitute an ABC transporter 2 domain; the sequence is VEFKNVEIKY…EGSRFKKLVK (235 aa). Residue 1171-1178 participates in ATP binding; the sequence is GRTGAGKS.

The protein belongs to the ABC transporter superfamily. ABCC family. Conjugate transporter (TC 3.A.1.208) subfamily.

The protein resides in the membrane. The protein is ABC transporter C family member 2 (abcC2) of Dictyostelium discoideum (Social amoeba).